Here is a 505-residue protein sequence, read N- to C-terminus: ATP synthase subunit alpha (505 aa).

Residue 170–177 (GDRQTGKT) participates in ATP binding.

This sequence belongs to the ATPase alpha/beta chains family. In terms of assembly, F-type ATPases have 2 components, CF(1) - the catalytic core - and CF(0) - the membrane proton channel. CF(1) has five subunits: alpha(3), beta(3), gamma(1), delta(1), epsilon(1). CF(0) has four main subunits: a(1), b(1), b'(1) and c(9-12).

It is found in the cellular thylakoid membrane. The enzyme catalyses ATP + H2O + 4 H(+)(in) = ADP + phosphate + 5 H(+)(out). Produces ATP from ADP in the presence of a proton gradient across the membrane. The alpha chain is a regulatory subunit. The sequence is that of ATP synthase subunit alpha from Prochlorococcus marinus (strain MIT 9515).